A 524-amino-acid chain; its full sequence is 2-isopropylmalate synthase (524 aa).

Positions 15 to 275 (VVVFDTTMRD…PYGTSVDPVH (261 aa)) constitute a Pyruvate carboxyltransferase domain. Asp24, His212, His214, and Asn248 together coordinate Mn(2+). Residues 401-524 (RVSRLRVVAG…RPEAAIASGF (124 aa)) are regulatory domain.

The protein belongs to the alpha-IPM synthase/homocitrate synthase family. LeuA type 1 subfamily. As to quaternary structure, homodimer. It depends on Mn(2+) as a cofactor.

The protein resides in the cytoplasm. The enzyme catalyses 3-methyl-2-oxobutanoate + acetyl-CoA + H2O = (2S)-2-isopropylmalate + CoA + H(+). Its pathway is amino-acid biosynthesis; L-leucine biosynthesis; L-leucine from 3-methyl-2-oxobutanoate: step 1/4. Functionally, catalyzes the condensation of the acetyl group of acetyl-CoA with 3-methyl-2-oxobutanoate (2-ketoisovalerate) to form 3-carboxy-3-hydroxy-4-methylpentanoate (2-isopropylmalate). This chain is 2-isopropylmalate synthase, found in Caulobacter vibrioides (strain ATCC 19089 / CIP 103742 / CB 15) (Caulobacter crescentus).